The primary structure comprises 186 residues: Protein Syd (186 aa).

This sequence belongs to the Syd family.

It localises to the cell inner membrane. Interacts with the SecY protein in vivo. May bind preferentially to an uncomplexed state of SecY, thus functioning either as a chelating agent for excess SecY in the cell or as a regulatory factor that negatively controls the translocase function. This is Protein Syd from Erwinia tasmaniensis (strain DSM 17950 / CFBP 7177 / CIP 109463 / NCPPB 4357 / Et1/99).